A 331-amino-acid polypeptide reads, in one-letter code: Thiamine thiazole synthase (331 aa).

Substrate is bound by residues C86, 107–108, G115, and V183; that span reads EA. C220 is subject to 2,3-didehydroalanine (Cys). Substrate is bound by residues D222, H237, M289, and 299–301; that span reads RMG.

Belongs to the THI4 family. As to quaternary structure, homooctamer. Fe cation serves as cofactor. During the catalytic reaction, a sulfide is transferred from Cys-220 to a reaction intermediate, generating a dehydroalanine residue.

Its subcellular location is the cytoplasm. The protein localises to the nucleus. The enzyme catalyses [ADP-thiazole synthase]-L-cysteine + glycine + NAD(+) = [ADP-thiazole synthase]-dehydroalanine + ADP-5-ethyl-4-methylthiazole-2-carboxylate + nicotinamide + 3 H2O + 2 H(+). Its function is as follows. Involved in biosynthesis of the thiamine precursor thiazole. Catalyzes the conversion of NAD and glycine to adenosine diphosphate 5-(2-hydroxyethyl)-4-methylthiazole-2-carboxylic acid (ADT), an adenylated thiazole intermediate. The reaction includes an iron-dependent sulfide transfer from a conserved cysteine residue of the protein to a thiazole intermediate. The enzyme can only undergo a single turnover, which suggests it is a suicide enzyme. May have additional roles in adaptation to various stress conditions and in DNA damage tolerance. The sequence is that of Thiamine thiazole synthase from Emericella nidulans (strain FGSC A4 / ATCC 38163 / CBS 112.46 / NRRL 194 / M139) (Aspergillus nidulans).